The sequence spans 459 residues: Vitronectin (459 aa).

A signal peptide spans 1-19; the sequence is MAPLRPLLMLALLAWVALA. Residues 20–63 enclose the SMB domain; sequence DQESCKGRCTDGFIAERKCQCDELCSYYQSCCTDYVAECKPQVT. 7 disulfide bridges follow: C24/C28, C24/C40, C28/C58, C38/C40, C38/C51, C44/C50, and C51/C58. A Cell attachment site motif is present at residues 64 to 66; it reads RGD. 3 positions are modified to sulfotyrosine: Y75, Y78, and Y80. N-linked (GlcNAc...) asparagine glycans are attached at residues N87 and N146. Hemopexin repeat units lie at residues 135-179, 180-227, and 228-285; these read GKPF…VWGI, KGPI…FKGI, and PDDV…FALM. A phosphoserine mark is found at S289 and S378. Residues 338–380 are disordered; the sequence is LKPSQPKMTKSARRSGKRYRSRRGRGRGRGHSRSQKSHRQSRS. Over residues 347–378 the composition is skewed to basic residues; the sequence is KSARRSGKRYRSRRGRGRGRGHSRSQKSHRQS. A sulfotyrosine mark is found at Y398 and Y401. One copy of the Hemopexin 4 repeat lies at 400–453; that stretch reads DYKMDWLVPATCEPIQSVYFFSGEEYYRVNLRTQRVDTVTPPYPRSIAQYWLGC.

In terms of assembly, monomer. Interacts with SERPINE1/PAI1 and C1QBP. In terms of processing, sulfated on tyrosine residues. N- and O-glycosylated. Post-translationally, it has been suggested that the active SMB domain may be permitted considerable disulfide bond heterogeneity or variability, thus two alternate disulfide patterns based on 3D structures are described with 1 disulfide bond conserved in both. As to expression, plasma.

Its subcellular location is the secreted. The protein resides in the extracellular space. Functionally, vitronectin is a cell adhesion and spreading factor found in serum and tissues. Vitronectin interact with glycosaminoglycans and proteoglycans. Is recognized by certain members of the integrin family and serves as a cell-to-substrate adhesion molecule. Inhibitor of the membrane-damaging effect of the terminal cytolytic complement pathway. The polypeptide is Vitronectin (VTN) (Sus scrofa (Pig)).